We begin with the raw amino-acid sequence, 188 residues long: dCTP deaminase (188 aa).

DCTP-binding positions include 111–116, 135–137, Q156, Y170, K179, and Q180; these read KSTYAR and TLE. The Proton donor/acceptor role is filled by E137.

It belongs to the dCTP deaminase family. Homotrimer.

It catalyses the reaction dCTP + H2O + H(+) = dUTP + NH4(+). Its pathway is pyrimidine metabolism; dUMP biosynthesis; dUMP from dCTP (dUTP route): step 1/2. Functionally, catalyzes the deamination of dCTP to dUTP. This is dCTP deaminase from Orientia tsutsugamushi (strain Boryong) (Rickettsia tsutsugamushi).